Here is a 456-residue protein sequence, read N- to C-terminus: MDEIQEPLALTVHLLADTGNGLLLQQALDQLLECICPEVRLFLVSERARPVNYHEKYHPRRARFPGMSVLLFLQESLGQERLFRVLDFLRRSPWQGFPTQHAQGRSCSYLPANQEFYSLHNQMPVWGMRPVNCGTDILRVTLYCSFDNYEDAIRLYEMLLQRDATVQKSDFCFFVLYATEGFSLQLSLKQLPLGMSVDPKESSVLQFRVQEIGQLVPLLPNPCVPISSARWQTQDYDGNKILLQVHPKPGVGIKNGEHPFLNGCLRGDTHPQDSSLNSVSTQRTLEPRSRRRSRSRRFKVHSLELPQPSGSWENSTDPLWRRLGWSTLADSSASGMQQRRLSIPIEPKMGRNVLREDGFEKLEAETNVDTGFTIINSEPRRSFPSRFPRDFQSSQPPRCLSGSSLEVTVSPNQGVFKDRLHPLSLPSQRDFGAKKVISKCSHHLQAQGEEKEEFFI.

Residues 262–313 are disordered; the sequence is NGCLRGDTHPQDSSLNSVSTQRTLEPRSRRRSRSRRFKVHSLELPQPSGSWE. Residues 272 to 284 show a composition bias toward polar residues; that stretch reads QDSSLNSVSTQRT. Residues 289–300 show a composition bias toward basic residues; the sequence is SRRRSRSRRFKV.

This sequence belongs to the FAM124 family. In terms of assembly, interacts with CHD7 and CHD8. Expressed strongly in lung, at slightly lower levels in heart, kidney, brain and testis, and weakly in liver (at protein level). In brain, highly expressed in cortex, hippocampus, dentate gyrus, caudate putamen and cerebellum (at protein level).

The protein resides in the nucleus. The protein is Protein FAM124B (Fam124b) of Mus musculus (Mouse).